Here is a 137-residue protein sequence, read N- to C-terminus: Early nodulin-55-1 (137 aa).

In terms of domain architecture, Phytocyanin spans 1–67; it reads KYDERTESVH…GLKLMVVVMS (67 aa). 3 N-linked (GlcNAc...) asparagine glycosylation sites follow: Asn13, Asn51, and Asn68. An intrachain disulfide couples Cys20 to Cys55. The interval 70 to 115 is disordered; that stretch reads TKKKLIHSPSPSSPSPSPSPSPSPSPSPSPSLSSPSPSPLPNNQGV. Residues 80-98 are compositionally biased toward pro residues; that stretch reads PSSPSPSPSPSPSPSPSPS.

Belongs to the early nodulin-like (ENODL) family.

It localises to the symbiosome. The protein resides in the peribacteroid membrane. Its function is as follows. May act as a carbohydrate transporter. The polypeptide is Early nodulin-55-1 (Glycine max (Soybean)).